A 240-amino-acid polypeptide reads, in one-letter code: Coatomer subunit delta (240 aa).

Residues alanine 215 to lysine 226 show a composition bias toward low complexity. Positions alanine 215 to tyrosine 240 are disordered. A compositionally biased stretch (basic residues) spans glycine 231–tyrosine 240.

This sequence belongs to the adaptor complexes medium subunit family. Delta-COP subfamily. As to quaternary structure, oligomeric complex that consists of at least the alpha, beta, beta', gamma, delta, epsilon and zeta subunits.

It is found in the cytoplasm. Its subcellular location is the nucleus. The coatomer is a cytosolic protein complex that binds to dilysine motifs and reversibly associates with Golgi non-clathrin-coated vesicles, which further mediate biosynthetic protein transport from the ER, via the Golgi up to the trans Golgi network. Coatomer complex is required for budding from Golgi membranes, and is essential for the retrograde Golgi-to-ER transport of dilysine-tagged proteins. This chain is Coatomer subunit delta (ret2), found in Schizosaccharomyces pombe (strain 972 / ATCC 24843) (Fission yeast).